Reading from the N-terminus, the 320-residue chain is uncharacterized protein (320 aa).

46–53 (DVPGVGKT) provides a ligand contact to ATP.

It belongs to the MoxR family.

This is an uncharacterized protein from Bacillus subtilis (strain 168).